The following is a 248-amino-acid chain: Granzyme C (248 aa).

Residues 1–18 (MPPVLILLTLLLPLRAGA) form the signal peptide. Residues 19-20 (EE) constitute a propeptide that is removed on maturation. Residues 21 to 246 (IIGGNEISPH…FVSWIKKTMK (226 aa)) form the Peptidase S1 domain. Cys50 and Cys66 form a disulfide bridge. Catalysis depends on charge relay system residues His65 and Asp109. Cystine bridges form between Cys143–Cys210 and Cys174–Cys189. Residue Ser204 is the Charge relay system of the active site.

It belongs to the peptidase S1 family. Granzyme subfamily.

It is found in the cytolytic granule. Functionally, this enzyme is probably necessary for target cell lysis in cell-mediated immune responses. This is Granzyme C (Gzmc) from Mus musculus (Mouse).